An 800-amino-acid polypeptide reads, in one-letter code: MPGKVYTDEMEGKSIKKKKLTETPLPKLKKRKMQNGETEDLDLEHVTESVNGEINNNNPTPKLKKNKKPAPKSDLSETAEQCDGEQPDPSTPTPKKVKKKKLKEGKEDSDAQEETNISLSSQGGQCDGEQPDPSTPTPKKIKKKKLKEGKEDSDAQEETDISEPQMNGVKSVKKSKKNTTGDEPAPKKRKTDTSEITAANECEEKELTKEEEEIKKEKIDGDFSKFPISKDTIKNLQAKGVTYLFPIQSKTFHTVYSGKDVVVQARTGTGKTFSFGIPLVERLSEDQQPLARGRAPRVIILTPTRELAIQITNELRSMTKKLKVACFYGGTPYQQQVFAIKDGIDFLVGTPGRIRDLVQNYRLDLTALKHVVLDEVDMMFDVGFSEQVEEILSVRYKPDPEENPQTLLFSATCPDWMYNVAKKYMRKQYEKVDLVGHRSQKAAITVEHLAIECNRSQKAAVLGDIVQVYSGSHGKTIIFCDSKLQAHELSTNCGSLKQSAKPLHGDLQQKEREVVLKGFRQGTFEVLIATNVAARGLDIPEVDLVVLYSAPKEADAYVHRSGRTGRAGRTGVCISLYEPWEKHYLRNVERSTGITFKRVGIPSLMNVAKSSSADAIKSLDTVPADVIEHFKEYAQELIEKKGALTALAAALAHISGATSIKQRSLLNMEAGYMTITLKSSVPIHNLSYAWRSIKEQLGEDVDSKIHRMCLLKDSMGVCFDVRSEDLQSMQESWSDTRRWQFTITTELPEIQESERSFDGPRNRSFGGRGRRPFDRRNNSRNSSGGGGGRRGRSGGFRRGR.

Residues 1–14 are compositionally biased toward basic and acidic residues; the sequence is MPGKVYTDEMEGKS. The tract at residues 1 to 200 is disordered; it reads MPGKVYTDEM…TDTSEITAAN (200 aa). A compositionally biased stretch (polar residues) spans 114-124; sequence ETNISLSSQGG. The Q motif motif lies at 221-249; it reads GDFSKFPISKDTIKNLQAKGVTYLFPIQS. Residues 252 to 431 form the Helicase ATP-binding domain; it reads FHTVYSGKDV…KKYMRKQYEK (180 aa). Residue 265–272 coordinates ATP; that stretch reads ARTGTGKT. Residues 374–377 carry the DEAD box motif; sequence DEVD. One can recognise a Helicase C-terminal domain in the interval 464-620; the sequence is DIVQVYSGSH…SSADAIKSLD (157 aa). Positions 750 to 800 are disordered; that stretch reads IQESERSFDGPRNRSFGGRGRRPFDRRNNSRNSSGGGGGRRGRSGGFRRGR. The segment covering 752–761 has biased composition (basic and acidic residues); the sequence is ESERSFDGPR. A compositionally biased stretch (basic residues) spans 789–800; that stretch reads RRGRSGGFRRGR.

The protein belongs to the DEAD box helicase family. DDX21/DDX50 subfamily. As to expression, widely expressed. Expressed at higher level in stomach. Expressed at lower level compared to ddx21-a.

The protein resides in the nucleus. Its subcellular location is the nucleolus. It localises to the nucleoplasm. The protein localises to the cytoplasm. It is found in the cytosol. The protein resides in the mitochondrion. It catalyses the reaction ATP + H2O = ADP + phosphate + H(+). In terms of biological role, RNA helicase that acts as a sensor of the transcriptional status of both RNA polymerase (Pol) I and II: promotes ribosomal RNA (rRNA) processing and transcription from polymerase II (Pol II). Binds various RNAs, such as rRNAs, snoRNAs, 7SK and, at lower extent, mRNAs. In the nucleolus, localizes to rDNA locus, where it directly binds rRNAs and snoRNAs, and promotes rRNA transcription, processing and modification. Required for rRNA 2'-O-methylation, possibly by promoting the recruitment of late-acting snoRNAs SNORD56 and SNORD58 with pre-ribosomal complexes. In the nucleoplasm, binds 7SK RNA and is recruited to the promoters of Pol II-transcribed genes: acts by facilitating the release of P-TEFb from inhibitory 7SK snRNP in a manner that is dependent on its helicase activity, thereby promoting transcription of its target genes. Required to prevent R-loop-associated DNA damage and transcription-associated genomic instability. This is Nucleolar RNA helicase 2-B (ddx21-b) from Xenopus laevis (African clawed frog).